The chain runs to 651 residues: Protein EXECUTER 2, chloroplastic (651 aa).

The transit peptide at 1-69 (MATTQPCLIG…KAPSLSCLRN (69 aa)) directs the protein to the chloroplast. Residues 103 to 138 (ESVVSLLKSQLEDAVEKEDFEEAVKLKQAISEATVD) enclose the UVR domain. Positions 330-359 (DATEELVGEGTEETNSSDDEEEVEEEENDS) are disordered.

The protein localises to the plastid. The protein resides in the chloroplast. Its function is as follows. Together with EX1, enables higher plants to perceive singlet oxygen as a stress signal in plastid that activates a genetically determined nuclear stress response program which triggers a programmed cell death (PCD). This transfer of singlet oxygen-induced stress-related signals from the plastid to the nucleus that triggers genetically controlled PCD pathway is unique to photosynthetic eukaryotes and operates under mild stress conditions, impeding photosystem II (PSII) without causing photooxidative damage of the plant. In Arabidopsis thaliana (Mouse-ear cress), this protein is Protein EXECUTER 2, chloroplastic.